Consider the following 959-residue polypeptide: Transcription factor 1 (959 aa).

2 consecutive C2H2-type zinc fingers follow at residues 2–24 (VFCT…ILTH) and 30–52 (FKCF…YTVH). Positions 79–105 (CSNCAKTKTKCDKKFPCSRCASRNLRC) form a DNA-binding region, zn(2)-C6 fungal-type. Residues 154–226 (PTGHVEESSK…SFPGFDDYNQ (73 aa)) form a disordered region. A compositionally biased stretch (low complexity) spans 163–178 (KSSSPSGSPTSISHNS).

The protein localises to the nucleus. Functionally, elsinochromes biosynthesis cluster-specific transcription factor that positively regulates the expression of cluster genes including RDT1, PKS1, PRF1 and HP1, and subsequent elsinochromes production. This is Transcription factor 1 from Elsinoe fawcettii (Citrus scab fungus).